The following is a 28-amino-acid chain: Gamma-conotoxin-like de7a (28 aa).

Intrachain disulfides connect cysteine 2–cysteine 18, cysteine 9–cysteine 22, and cysteine 17–cysteine 27. Proline 4 carries the post-translational modification 4-hydroxyproline. Glutamate 13 and glutamate 16 each carry 4-carboxyglutamate. Serine amide is present on serine 28.

It belongs to the conotoxin O1 superfamily. Expressed by the venom duct.

It localises to the secreted. In terms of biological role, gamma-conotoxins may act on voltage-gated non-specific cation pacemaker channels (HCN). The protein is Gamma-conotoxin-like de7a of Conasprella delessertii (Sozon's cone).